The following is a 382-amino-acid chain: Lipid-A-disaccharide synthase (382 aa).

The protein belongs to the LpxB family.

It carries out the reaction 2-N,3-O-bis[(3R)-3-hydroxytetradecanoyl]-alpha-D-glucosaminyl 1-phosphate + UDP-2-N,3-O-bis[(3R)-3-hydroxytetradecanoyl]-alpha-D-glucosamine = lipid A disaccharide (E. coli) + UDP + H(+). The enzyme catalyses a lipid X + a UDP-2-N,3-O-bis[(3R)-3-hydroxyacyl]-alpha-D-glucosamine = a lipid A disaccharide + UDP + H(+). It participates in glycolipid biosynthesis; lipid IV(A) biosynthesis; lipid IV(A) from (3R)-3-hydroxytetradecanoyl-[acyl-carrier-protein] and UDP-N-acetyl-alpha-D-glucosamine: step 5/6. Functionally, condensation of UDP-2,3-diacylglucosamine and 2,3-diacylglucosamine-1-phosphate to form lipid A disaccharide, a precursor of lipid A, a phosphorylated glycolipid that anchors the lipopolysaccharide to the outer membrane of the cell. The chain is Lipid-A-disaccharide synthase from Escherichia coli (strain 55989 / EAEC).